Reading from the N-terminus, the 239-residue chain is Ribonuclease 3 (239 aa).

An RNase III domain is found at 18 to 141; the sequence is YTTLEKALGY…LMAGVYLEAG (124 aa). Residue glutamate 54 participates in Mg(2+) binding. The active site involves aspartate 58. Residues serine 127 and glutamate 130 each contribute to the Mg(2+) site. The active site involves glutamate 130. One can recognise a DRBM domain in the interval 168–237; it reads DYKTALQELT…AYQALQKLKE (70 aa).

The protein belongs to the ribonuclease III family. In terms of assembly, homodimer. Mg(2+) is required as a cofactor.

The protein localises to the cytoplasm. The catalysed reaction is Endonucleolytic cleavage to 5'-phosphomonoester.. Functionally, digests double-stranded RNA. Involved in the processing of primary rRNA transcript to yield the immediate precursors to the large and small rRNAs (23S and 16S). Processes some mRNAs, and tRNAs when they are encoded in the rRNA operon. Processes pre-crRNA and tracrRNA of type II CRISPR loci if present in the organism. The protein is Ribonuclease 3 of Helicobacter pylori (strain ATCC 700392 / 26695) (Campylobacter pylori).